The following is a 178-amino-acid chain: Hypoxanthine phosphoribosyltransferase (178 aa).

Diphosphate is bound by residues arginine 43 and glycine 44. Glutamate 99 serves as a coordination point for GMP. Glutamate 99 is an IMP binding site. Positions 99 and 100 each coordinate Mg(2+). The active-site Proton acceptor is the aspartate 103. GMP-binding positions include 103–108 (DSGNTL), lysine 131, and aspartate 159. IMP-binding positions include 103–108 (DSGNTL) and lysine 131. Arginine 165 is a diphosphate binding site.

The protein belongs to the purine/pyrimidine phosphoribosyltransferase family. As to quaternary structure, homotetramer. Mg(2+) serves as cofactor.

The protein resides in the cytoplasm. The enzyme catalyses IMP + diphosphate = hypoxanthine + 5-phospho-alpha-D-ribose 1-diphosphate. It carries out the reaction GMP + diphosphate = guanine + 5-phospho-alpha-D-ribose 1-diphosphate. It participates in purine metabolism; IMP biosynthesis via salvage pathway; IMP from hypoxanthine: step 1/1. In terms of biological role, purine salvage pathway enzyme which catalyzes the transfer of the ribosyl-5-phosphate group from 5-phospho-alpha-D-ribose 1-diphosphate (PRPP) to the N9 position of hypoxanthine to yield IMP (inosine 5'-monophosphate). To a lesser extent, can also act on guanine leading to GMP, but shows a highly less efficient activity with xanthine. The protein is Hypoxanthine phosphoribosyltransferase (hpt) of Shigella flexneri.